The following is a 318-amino-acid chain: Protein OPG137 (318 aa).

A coiled-coil region spans residues Val145–Ser172.

Belongs to the orthopoxvirus OPG137 family. Homomultimer. Interacts with OPG160. In terms of processing, phosphorylated by a OPG054-independent mechanism.

Its subcellular location is the host cytoplasm. In terms of biological role, required for viral crescent formation early during virus morphogenesis. The chain is Protein OPG137 (OPG137) from Vaccinia virus (strain Ankara) (VACV).